Consider the following 164-residue polypeptide: Protein SprT (164 aa).

The SprT-like domain occupies 14–156 (QQAETFFKRP…LCKRCRAILV (143 aa)). Histidine 69 serves as a coordination point for Zn(2+). Glutamate 70 is a catalytic residue. Histidine 73 serves as a coordination point for Zn(2+).

Belongs to the SprT family. Zn(2+) serves as cofactor.

It is found in the cytoplasm. This Pseudomonas putida (strain GB-1) protein is Protein SprT.